The following is a 393-amino-acid chain: MANDFLFTSESVSEGHPDKVADQISDAILDAIFAQDPYSRVAAETLTNTGLVVLAGEITTGANVDYIQVARDTIKRIGYDNTDYGIDYKGCAVLVAYDKQSQDIAQGVDKASDDELNTGAGDQGLMFGYACDETPELMPAPIYYAHRLVERQAQLRKDGRLPFLRPDAKSQVTMRYVDGKPHSIDTVVLSTQHSPDQSETATKMKASFTEAIIEEIIKPVLPSEWLQDTKYLINPTGRFVVGGPQGDCGLTGRKIIVDTYGGACPHGGGAFSGKDPTKVDRSAAYAARYVAKNIVAAGLARQCQIQVAYAIGVARPMNITVYTEGTGVIPDAEIAKLVAAHFDLRPKGIIQMLDLLRPIYSKTAAYGHFGREEPEFTWERTDKAAVLRAAAGL.

Residue His-16 participates in ATP binding. A Mg(2+)-binding site is contributed by Asp-18. Glu-44 provides a ligand contact to K(+). Residues Glu-57 and Gln-100 each contribute to the L-methionine site. The flexible loop stretch occupies residues 100–110 (QSQDIAQGVDK). ATP contacts are provided by residues 167 to 169 (DAK), 238 to 239 (RF), Asp-247, 253 to 254 (RK), Ala-270, and Lys-274. Residue Asp-247 participates in L-methionine binding. Lys-278 provides a ligand contact to L-methionine.

The protein belongs to the AdoMet synthase family. Homotetramer; dimer of dimers. It depends on Mg(2+) as a cofactor. K(+) serves as cofactor.

The protein resides in the cytoplasm. It carries out the reaction L-methionine + ATP + H2O = S-adenosyl-L-methionine + phosphate + diphosphate. It functions in the pathway amino-acid biosynthesis; S-adenosyl-L-methionine biosynthesis; S-adenosyl-L-methionine from L-methionine: step 1/1. Catalyzes the formation of S-adenosylmethionine (AdoMet) from methionine and ATP. The overall synthetic reaction is composed of two sequential steps, AdoMet formation and the subsequent tripolyphosphate hydrolysis which occurs prior to release of AdoMet from the enzyme. This is S-adenosylmethionine synthase from Delftia acidovorans (strain DSM 14801 / SPH-1).